Here is a 296-residue protein sequence, read N- to C-terminus: Phosphatidylglycerol--prolipoprotein diacylglyceryl transferase (296 aa).

Transmembrane regions (helical) follow at residues Leu17 to Gly37, Met59 to Tyr79, and Gly97 to Trp117. Residue Arg142 coordinates a 1,2-diacyl-sn-glycero-3-phospho-(1'-sn-glycerol). A run of 2 helical transmembrane segments spans residues Met230 to Phe250 and Leu265 to Trp285.

The protein belongs to the Lgt family.

Its subcellular location is the cell inner membrane. It carries out the reaction L-cysteinyl-[prolipoprotein] + a 1,2-diacyl-sn-glycero-3-phospho-(1'-sn-glycerol) = an S-1,2-diacyl-sn-glyceryl-L-cysteinyl-[prolipoprotein] + sn-glycerol 1-phosphate + H(+). It participates in protein modification; lipoprotein biosynthesis (diacylglyceryl transfer). Functionally, catalyzes the transfer of the diacylglyceryl group from phosphatidylglycerol to the sulfhydryl group of the N-terminal cysteine of a prolipoprotein, the first step in the formation of mature lipoproteins. The protein is Phosphatidylglycerol--prolipoprotein diacylglyceryl transferase of Burkholderia thailandensis (strain ATCC 700388 / DSM 13276 / CCUG 48851 / CIP 106301 / E264).